Here is a 374-residue protein sequence, read N- to C-terminus: uncharacterized protein (374 aa).

A divalent metal cation contacts are provided by aspartate 158, histidine 160, aspartate 190, asparagine 221, histidine 312, and histidine 314.

The protein belongs to the metallophosphoesterase superfamily. The cofactor is a divalent metal cation.

This is an uncharacterized protein from Campylobacter jejuni subsp. jejuni serotype O:2 (strain ATCC 700819 / NCTC 11168).